We begin with the raw amino-acid sequence, 213 residues long: Protein-L-isoaspartate O-methyltransferase (213 aa).

Residue Ser58 is part of the active site.

It belongs to the methyltransferase superfamily. L-isoaspartyl/D-aspartyl protein methyltransferase family.

The protein resides in the cytoplasm. The enzyme catalyses [protein]-L-isoaspartate + S-adenosyl-L-methionine = [protein]-L-isoaspartate alpha-methyl ester + S-adenosyl-L-homocysteine. In terms of biological role, catalyzes the methyl esterification of L-isoaspartyl residues in peptides and proteins that result from spontaneous decomposition of normal L-aspartyl and L-asparaginyl residues. It plays a role in the repair and/or degradation of damaged proteins. The sequence is that of Protein-L-isoaspartate O-methyltransferase from Chlorobaculum tepidum (strain ATCC 49652 / DSM 12025 / NBRC 103806 / TLS) (Chlorobium tepidum).